The primary structure comprises 657 residues: 2',3'-cyclic-nucleotide 2'-phosphodiesterase/3'-nucleotidase (657 aa).

Residues 1–26 (MMNRRHFIQISATSILALSANRFAMA) form the signal peptide. Residues Asp-41, His-43, Asp-86, Asn-126, His-235, His-267, and His-269 each contribute to the a divalent metal cation site. Substrate contacts are provided by residues Tyr-450 and 554–559 (YRAYGN).

It belongs to the 5'-nucleotidase family. Requires a divalent metal cation as cofactor.

The protein localises to the periplasm. The enzyme catalyses a nucleoside 2',3'-cyclic phosphate + H2O = a nucleoside 3'-phosphate + H(+). The catalysed reaction is a ribonucleoside 3'-phosphate + H2O = a ribonucleoside + phosphate. Functionally, this bifunctional enzyme catalyzes two consecutive reactions during ribonucleic acid degradation. Converts a 2',3'-cyclic nucleotide to a 3'-nucleotide and then the 3'-nucleotide to the corresponding nucleoside and phosphate. The protein is 2',3'-cyclic-nucleotide 2'-phosphodiesterase/3'-nucleotidase (cpdB) of Haemophilus influenzae (strain ATCC 51907 / DSM 11121 / KW20 / Rd).